Here is a 340-residue protein sequence, read N- to C-terminus: DNA-directed RNA polymerase subunit alpha (340 aa).

The tract at residues 1 to 236 (MLSLSKNWNT…EQLQLFIAFE (236 aa)) is alpha N-terminal domain (alpha-NTD). The segment at 251–340 (FSPYLLKRVD…LSKRYEDSYN (90 aa)) is alpha C-terminal domain (alpha-CTD).

The protein belongs to the RNA polymerase alpha chain family. As to quaternary structure, homodimer. The RNAP catalytic core consists of 2 alpha, 1 beta, 1 beta' and 1 omega subunit. When a sigma factor is associated with the core the holoenzyme is formed, which can initiate transcription.

The enzyme catalyses RNA(n) + a ribonucleoside 5'-triphosphate = RNA(n+1) + diphosphate. In terms of biological role, DNA-dependent RNA polymerase catalyzes the transcription of DNA into RNA using the four ribonucleoside triphosphates as substrates. In Rickettsia typhi (strain ATCC VR-144 / Wilmington), this protein is DNA-directed RNA polymerase subunit alpha.